A 149-amino-acid polypeptide reads, in one-letter code: D-aminoacyl-tRNA deacylase (149 aa).

The Gly-cisPro motif, important for rejection of L-amino acids signature appears at 137-138; the sequence is GP.

The protein belongs to the DTD family. In terms of assembly, homodimer.

It localises to the cytoplasm. The enzyme catalyses glycyl-tRNA(Ala) + H2O = tRNA(Ala) + glycine + H(+). It catalyses the reaction a D-aminoacyl-tRNA + H2O = a tRNA + a D-alpha-amino acid + H(+). Its function is as follows. An aminoacyl-tRNA editing enzyme that deacylates mischarged D-aminoacyl-tRNAs. Also deacylates mischarged glycyl-tRNA(Ala), protecting cells against glycine mischarging by AlaRS. Acts via tRNA-based rather than protein-based catalysis; rejects L-amino acids rather than detecting D-amino acids in the active site. By recycling D-aminoacyl-tRNA to D-amino acids and free tRNA molecules, this enzyme counteracts the toxicity associated with the formation of D-aminoacyl-tRNA entities in vivo and helps enforce protein L-homochirality. This chain is D-aminoacyl-tRNA deacylase, found in Paracoccus denitrificans (strain Pd 1222).